Here is a 180-residue protein sequence, read N- to C-terminus: MGDPKRQRKKYETPSHPWIKERLDRERVLKRNYALKNKKELWRHETQLKEFRRRARRLLAARGKQAEIERQQLLQRLYRLGLLPADAVLDDVLSLTVEDVLERRLQTIVYRKGLARTMKQARQLIVHGHIEVNGQVIRSPGYLVLREEEDTITYAKGSPFAKEGHPERMVIEQAKQGGEA.

An S4 RNA-binding domain is found at 103 to 165 (RRLQTIVYRK…KGSPFAKEGH (63 aa)).

This sequence belongs to the universal ribosomal protein uS4 family. In terms of assembly, part of the 30S ribosomal subunit. Contacts protein S5. The interaction surface between S4 and S5 is involved in control of translational fidelity.

One of the primary rRNA binding proteins, it binds directly to 16S rRNA where it nucleates assembly of the body of the 30S subunit. Functionally, with S5 and S12 plays an important role in translational accuracy. The chain is Small ribosomal subunit protein uS4 from Thermococcus kodakarensis (strain ATCC BAA-918 / JCM 12380 / KOD1) (Pyrococcus kodakaraensis (strain KOD1)).